The sequence spans 487 residues: b(0,+)-type amino acid transporter 1 (487 aa).

Residues 1 to 15 (MGDTGLRKRREDEKS) are compositionally biased toward basic and acidic residues. The disordered stretch occupies residues 1 to 22 (MGDTGLRKRREDEKSIQSQEPK). The Cytoplasmic segment spans residues 1-31 (MGDTGLRKRREDEKSIQSQEPKTTSLQKELG). Serine 18 carries the phosphoserine modification. Residues 32-55 (LISGISIIVGTIIGSGIFVSPKSV) form a helical membrane-spanning segment. 43–47 (IIGSG) lines the L-arginine pocket. Topologically, residues 56-62 (LSNTEAV) are extracellular. A helical membrane pass occupies residues 63–84 (GPCLIIWAACGVLATLGALCFA). At 85-110 (ELGTMITKSGGEYPYLMEAYGPIPAY) the chain is on the cytoplasmic side. Residues 111–137 (LFSWASLIVIKPTSFAIICLSFSEYVC) traverse the membrane as a helical segment. Residues 138-147 (APFYVGCKPP) lie on the Extracellular side of the membrane. 2 helical membrane-spanning segments follow: residues 148–169 (QIVV…NSLS) and 170–193 (VRLG…IIII). Over 194-217 (SGLVLLAQGNTKNFDNSFEGAQLS) the chain is Extracellular. Residues 218–238 (VGAISLAFYNGLWAYDGWNQL) form a helical membrane-spanning segment. Aspartate 233 serves as a coordination point for L-arginine. The Cytoplasmic segment spans residues 239-251 (NYITEELRNPYRN). A helical transmembrane segment spans residues 252 to 274 (LPLAIIIGIPLVTACYILMNVSY). Residues 275–302 (FTVMTATELLQSQAVAVTFGDRVLYPAS) are Extracellular-facing. Residues 303 to 325 (WIVPLFVAFSTIGAANGTCFTAG) traverse the membrane as a helical segment. Over 326 to 351 (RLIYVAGREGHMLKVLSYISVRRLTP) the chain is Cytoplasmic. 2 consecutive transmembrane segments (helical) span residues 352 to 370 (APAI…IPGD) and 371 to 391 (INSL…LTIL). The Cytoplasmic portion of the chain corresponds to 392-410 (GLIVMRFTRKELERPIKVP). Residues 411–431 (VVIPVLMTLISVFLVLAPIIS) traverse the membrane as a helical segment. Residues 432 to 434 (KPT) lie on the Extracellular side of the membrane. A helical membrane pass occupies residues 435 to 450 (WEYLYCVLFILSGLLF). At 451-487 (YFLFVHYKFGWAQKISKPITMHLQMLMEVVPPEEDPE) the chain is on the cytoplasmic side.

This sequence belongs to the amino acid-polyamine-organocation (APC) superfamily. Disulfide-linked heterodimer composed of the catalytic light chain subunit SLC7A9 and the heavy chain subunit SLC3A1. The heterodimer is the minimal functional unit. Assembles in heterotetramers (dimers of heterodimers) and higher order oligomers; the oligomerization is mediated by SLC3A1 likely to prevent degradation and facilitate heteromer trafficking to the plasma membrane. Interacts with CAV1. In terms of tissue distribution, expressed in the brush border membrane in the kidney (at protein level). Kidney, small intestine, liver and placenta.

It localises to the apical cell membrane. Its subcellular location is the cell membrane. The enzyme catalyses L-leucine(out) + L-arginine(in) = L-leucine(in) + L-arginine(out). It catalyses the reaction L-histidine(out) + L-arginine(in) = L-histidine(in) + L-arginine(out). It carries out the reaction L-arginine(in) + L-phenylalanine(out) = L-arginine(out) + L-phenylalanine(in). The catalysed reaction is L-cysteine(out) + L-arginine(in) = L-cysteine(in) + L-arginine(out). The enzyme catalyses L-cystine(out) + L-arginine(in) = L-cystine(in) + L-arginine(out). It catalyses the reaction L-lysine(out) + L-arginine(in) = L-lysine(in) + L-arginine(out). Functionally, associates with SLC3A1 to form a functional transporter complex that mediates the electrogenic exchange between cationic amino acids and neutral amino acids, with a stoichiometry of 1:1. Has system b(0,+)-like activity with high affinity for extracellular cationic amino acids and L-cystine and lower affinity for intracellular neutral amino acids. Substrate exchange is driven by high concentration of intracellular neutral amino acids and the intracellular reduction of L-cystine to L-cysteine. Required for reabsorption of L-cystine and dibasic amino acids across the brush border membrane in renal proximal tubules. This Homo sapiens (Human) protein is b(0,+)-type amino acid transporter 1.